We begin with the raw amino-acid sequence, 339 residues long: Deoxyhypusine hydroxylase (339 aa).

HEAT-like PBS-type repeat units follow at residues 71 to 97 and 104 to 130; these read LKHE…VVKN and CRHE…LRDD. Fe cation-binding residues include H73, E74, H106, and E107. The interval 159-183 is disordered; the sequence is EKLKPSDFTSIDPAPPLPMASSQPS. 3 HEAT-like PBS-type repeats span residues 200–233, 238–264, and 271–298; these read QRYR…GLKD, FRHE…TLSD, and VRHE…FLND. 4 residues coordinate Fe cation: H240, E241, H273, and E274.

It belongs to the deoxyhypusine hydroxylase family. The cofactor is Fe(2+).

The protein localises to the cytoplasm. The protein resides in the nucleus. It carries out the reaction [eIF5A protein]-deoxyhypusine + AH2 + O2 = [eIF5A protein]-hypusine + A + H2O. It participates in protein modification; eIF5A hypusination. Catalyzes the hydroxylation of the N(6)-(4-aminobutyl)-L-lysine intermediate to form hypusine, an essential post-translational modification only found in mature eIF-5A factor. This is Deoxyhypusine hydroxylase (lia1) from Aspergillus oryzae (strain ATCC 42149 / RIB 40) (Yellow koji mold).